The chain runs to 192 residues: Neurogenic differentiation factor 1 (192 aa).

Residues Val-19–Leu-71 form the bHLH domain. A disordered region spans residues Pro-116 to Pro-192. A compositionally biased stretch (low complexity) spans Ser-139–Ser-163.

Expressed in neuroblasts of the AB lineage. More specifically in precursors of the embryonic ventral cord motor neurons. Expressed to a lesser degree in the EMS lineage which generates mostly endoderm and mesoderm tissues.

The protein localises to the nucleus. Its function is as follows. Acts as a transcriptional regulator whose activity is required for several aspects of motor neuron fate specification, including cell division patterns, proper spatiotemporal expression of fate-specific markers, and normal axonal morphology and pathfinding. Involved in regulating glial specification. The chain is Neurogenic differentiation factor 1 (cnd-1) from Caenorhabditis elegans.